A 244-amino-acid chain; its full sequence is Probable transcriptional regulatory protein MMOB1910 (244 aa).

Belongs to the TACO1 family.

Its subcellular location is the cytoplasm. The chain is Probable transcriptional regulatory protein MMOB1910 from Mycoplasma mobile (strain ATCC 43663 / 163K / NCTC 11711) (Mesomycoplasma mobile).